The sequence spans 416 residues: Serine hydroxymethyltransferase (416 aa).

Residues L121 and 125-127 (GHL) each bind (6S)-5,6,7,8-tetrahydrofolate. An N6-(pyridoxal phosphate)lysine modification is found at K229.

The protein belongs to the SHMT family. As to quaternary structure, homodimer. The cofactor is pyridoxal 5'-phosphate.

Its subcellular location is the cytoplasm. It carries out the reaction (6R)-5,10-methylene-5,6,7,8-tetrahydrofolate + glycine + H2O = (6S)-5,6,7,8-tetrahydrofolate + L-serine. The protein operates within one-carbon metabolism; tetrahydrofolate interconversion. It participates in amino-acid biosynthesis; glycine biosynthesis; glycine from L-serine: step 1/1. Functionally, catalyzes the reversible interconversion of serine and glycine with tetrahydrofolate (THF) serving as the one-carbon carrier. This reaction serves as the major source of one-carbon groups required for the biosynthesis of purines, thymidylate, methionine, and other important biomolecules. Also exhibits THF-independent aldolase activity toward beta-hydroxyamino acids, producing glycine and aldehydes, via a retro-aldol mechanism. In Neisseria meningitidis serogroup C (strain 053442), this protein is Serine hydroxymethyltransferase.